We begin with the raw amino-acid sequence, 166 residues long: Holin-like protein TcdE (166 aa).

4 helical membrane passes run 15–35, 36–56, 77–97, and 111–131; these read IFFY…LSEH, IFIK…CLSA, MIAC…NFLF, and HLGI…VSIL.

It belongs to the bacteriophage holin family. Homomultimer.

The protein localises to the cell membrane. Functionally, holin-like protein required for secretion of toxins A and B (TcdA and TcdB). Facilitates the release of toxins to the extracellular environment without causing the bacterial cell lysis. Has weak activity, suggesting that it may act as a antiholin when multiple forms are produced. This chain is Holin-like protein TcdE, found in Clostridioides difficile (Peptoclostridium difficile).